We begin with the raw amino-acid sequence, 120 residues long: Large ribosomal subunit protein bL20 (120 aa).

It belongs to the bacterial ribosomal protein bL20 family.

Its function is as follows. Binds directly to 23S ribosomal RNA and is necessary for the in vitro assembly process of the 50S ribosomal subunit. It is not involved in the protein synthesizing functions of that subunit. This chain is Large ribosomal subunit protein bL20, found in Cereibacter sphaeroides (strain ATCC 17029 / ATH 2.4.9) (Rhodobacter sphaeroides).